The following is a 1023-amino-acid chain: NLR family CARD domain-containing protein 4 (1023 aa).

The CARD domain occupies 1–88 (MNFIKENSQA…PVYQDLTGHS (88 aa)). Positions 95–298 (EEDLDVLAQS…HVGALTVEVG (204 aa)) are nucleotide-binding domain (NBD). An NACHT domain is found at 163–476 (SPCLIEGESG…VSKGNSYLKK (314 aa)). 169–176 (GESGKGKS) contributes to the ATP binding site. The interval 356 to 463 (AHTQTMLFQT…RLSSLLKSRE (108 aa)) is winged-helix domain (WHD). Phosphoserine is present on Ser533. LRR repeat units lie at residues 578-598 (FFQG…LFDF), 655-678 (MQKF…DIKY), 734-757 (VTDL…LADS), 761-784 (LKNL…SLAE), 786-811 (LRNL…DYIV), 823-846 (EMKL…LHNL), 847-869 (VKLS…ALQG), 877-901 (LEQL…LLKQ), 910-932 (KLGL…FLEM), 935-962 (LRDL…VFEN), 964-984 (KQLV…ALVR), and 998-1020 (EARL…TFKL).

In terms of assembly, homooligomer; homooligomerizes following activation of Naip proteins by pathogenic proteins such as S.typhimurium (Salmonella) flagellin or PrgJ. Component of the NLRC4 inflammasome, at least composed of NLRC4, caspase-1 (CASP1) and some NAIP family member. Interacts with EIF2AK2/PKR. Phosphorylated at Ser-533 following infection of macrophages with S.typhimurium (Salmonella). Phosphorylation is essential for NLRC4 inflammasome function to promote caspase-1 activation and pyroptosis. PRKCD phosphorylates Ser-533 in vitro.

It localises to the cytoplasm. Its subcellular location is the cytosol. Key component of inflammasomes that indirectly senses specific proteins from pathogenic bacteria and fungi and responds by assembling an inflammasome complex that promotes caspase-1 activation, cytokine production and macrophage pyroptosis. The NLRC4 inflammasome is activated as part of the innate immune response to a range of intracellular bacteria. In Rattus norvegicus (Rat), this protein is NLR family CARD domain-containing protein 4 (Nlrc4).